The primary structure comprises 338 residues: MAKLVIPSDYDPKMTIRETEKAIRYIRETFQTEFGTAMNLERISAPMFVKKSSGLNDNLSGWEKPVSFTLHDGNEGELQIVHSLAKWKRWALKHYGFSHGEGLFTNMNAIRKDEEVLDNLHSVYVDQWDWEKVIDKSERTEATLRQTVQRIFETIKGMEYHVRALYPQAAYHLPEEISFVTSEELEARWPSLTPSEREDKICQEKGAVFLEHIGGALPLSKKPHDLRAPDYDDWTLNGDLLFWYEPLQRAFEVSSMSIRVDEDRLQEQLKLAGAEDRLDLPFHQALLKGDLPYSIGGGIGQSRLCMLLLGKAHIGEVQASIWPDEIVEKCQAAKIQLL.

Belongs to the class-II aminoacyl-tRNA synthetase family. AsnA subfamily.

It is found in the cytoplasm. The catalysed reaction is L-aspartate + NH4(+) + ATP = L-asparagine + AMP + diphosphate + H(+). It functions in the pathway amino-acid biosynthesis; L-asparagine biosynthesis; L-asparagine from L-aspartate (ammonia route): step 1/1. This Lactobacillus delbrueckii subsp. bulgaricus (strain ATCC 11842 / DSM 20081 / BCRC 10696 / JCM 1002 / NBRC 13953 / NCIMB 11778 / NCTC 12712 / WDCM 00102 / Lb 14) protein is Aspartate--ammonia ligase.